We begin with the raw amino-acid sequence, 505 residues long: Glucan endo-1,3-beta-glucosidase 4 (505 aa).

An N-terminal signal peptide occupies residues 1–23 (MLLPRWFAEALLLLLSILACSNA). Residues asparagine 70 and asparagine 110 are each glycosylated (N-linked (GlcNAc...) asparagine). Glutamate 119 acts as the Proton donor in catalysis. N-linked (GlcNAc...) asparagine glycans are attached at residues asparagine 178 and asparagine 256. Glutamate 266 acts as the Nucleophile in catalysis. 3 N-linked (GlcNAc...) asparagine glycosylation sites follow: asparagine 298, asparagine 338, and asparagine 357. Cysteine 363 and cysteine 426 are oxidised to a cystine. N-linked (GlcNAc...) asparagine glycosylation occurs at asparagine 453. Residue alanine 474 is the site of GPI-anchor amidated alanine attachment. Residues 475-505 (NARIIFSYHLPILAPLALTLLQLLLQHDRLL) constitute a propeptide, removed in mature form.

Belongs to the glycosyl hydrolase 17 family. Post-translationally, contains two additional disulfide bonds.

It localises to the cell membrane. It catalyses the reaction Hydrolysis of (1-&gt;3)-beta-D-glucosidic linkages in (1-&gt;3)-beta-D-glucans.. This Arabidopsis thaliana (Mouse-ear cress) protein is Glucan endo-1,3-beta-glucosidase 4.